Here is a 257-residue protein sequence, read N- to C-terminus: NAD-capped RNA hydrolase NudC (257 aa).

Arg-69 serves as a coordination point for substrate. Residues Cys-98 and Cys-101 each coordinate Zn(2+). Glu-111 is a binding site for substrate. Zn(2+) contacts are provided by Cys-116 and Cys-119. Tyr-124 provides a ligand contact to substrate. A Nudix hydrolase domain is found at 125–248 (PQIAPCIIVA…TVARRLIEDT (124 aa)). Positions 158, 174, and 178 each coordinate a divalent metal cation. A Nudix box motif is present at residues 159–180 (GFVEVGETLEQAVAREVMEESG). 192-199 (QPWPFPQS) is a binding site for substrate. Glu-219 lines the a divalent metal cation pocket. Ala-241 is a binding site for substrate.

Belongs to the Nudix hydrolase family. NudC subfamily. In terms of assembly, homodimer. The cofactor is Mg(2+). Mn(2+) serves as cofactor. Requires Zn(2+) as cofactor.

The enzyme catalyses a 5'-end NAD(+)-phospho-ribonucleoside in mRNA + H2O = a 5'-end phospho-adenosine-phospho-ribonucleoside in mRNA + beta-nicotinamide D-ribonucleotide + 2 H(+). It carries out the reaction NAD(+) + H2O = beta-nicotinamide D-ribonucleotide + AMP + 2 H(+). It catalyses the reaction NADH + H2O = reduced beta-nicotinamide D-ribonucleotide + AMP + 2 H(+). Functionally, mRNA decapping enzyme that specifically removes the nicotinamide adenine dinucleotide (NAD) cap from a subset of mRNAs by hydrolyzing the diphosphate linkage to produce nicotinamide mononucleotide (NMN) and 5' monophosphate mRNA. The NAD-cap is present at the 5'-end of some mRNAs and stabilizes RNA against 5'-processing. Has preference for mRNAs with a 5'-end purine. Catalyzes the hydrolysis of a broad range of dinucleotide pyrophosphates. The chain is NAD-capped RNA hydrolase NudC from Klebsiella pneumoniae (strain 342).